We begin with the raw amino-acid sequence, 1544 residues long: MEPATTLPPGPRPALPLGGPGPLGEFLPPPECPVFEPSWEEFADPFAFIHKIRPIAEQTGICKVRPPPDWQPPFACDVDKLHFTPRIQRLNELEAQTRVKLNFLDQIAKYWELQGSTLKIPHVERKILDLFQLNKLVAEEGGFAVVCKDRKWTKIATKMGFAPGKAVGSHIRGHYERILNPYNLFLSGDSLRCLQKPNLTSDTKDKEYKPHDIPQRQSVQPAETCPPARRAKRMRAEAMNIKIEPEEATEARTHNLRRRMGCTTPKWENEKEMKSTIKQEPTEKKDCELESEKEKPKSRAKKTATAVDLYVCLLCGSGNDEDRLLLCDGCDDSYHTFCLVPPLHDVPKGDWRCPKCLAQECNKPQEAFGFEQAARDYTLRTFGEMADAFKSDYFNMPVHMVPTELVEKEFWRLVSTIEEDVTVEYGADIASKEFGSGFPVRDGKIKISPEEEEYLDSGWNLNNMPVMEQSVLAHITADICGMKLPWLYVGMCFSSFCWHIEDHWSYSINYLHWGEPKTWYGVPGYAAEQLENVMKKLAPELFVSQPDLLHQLVTIMNPNTLMTHEVPVYRTNQCAGEFVITFPRAYHSGFNQGFNFAEAVNFCTVDWLPLGRQCVEHYRLLHRYCVFSHDEMICKMASKADVLDVVVASTVQKDMAIMIEDEKALRETVRKLGVIDSERMDFELLPDDERQCIKCKTTCFMSAISCSCKPGLLVCLHHVKELCSCPPYKYNLRYRYTLDDLYPMMNALKLRAESYNEWALNVNEALEAKINKKKSLVSFKALIEESEMKKFPDNDLLRHLRLVTQDAEKCASVAQQLLNGKRQTRYRSGGGKSQNQLTVNELRQFVTQLYALPCVLSQTPLLKDLLNRVEDFQQQSQKLLSEEMPSAAELQELLDVSFEFDVELPQLTEMRIRLEQARWLEEVQQACLDSSSLSLDDMRRLIDLGVGLAPYSAVEKAMARLQELLTVSEHWDDKAKSLLRARPRHSLSSLATAVKEMEEIPAYLPNGTVLKDSVQRARDWVQDVDALQAGGRVPVLETLIELVARGRSIPVHLNSLPRLEMLVAEVHAWKECAAKTFLPENSTYSLLEVLCPRCDIGLLGLKRKQRKLKEPLPSGKKRSTKLESLSDLERALMESKETAAAMATLGEARLREMEALQSLRFANEEKLLSPVQDLEMKVCLCQKTPATPMIQCELCRDAFHTSCVAAPSISQSSRIWLCPHCRRSEKPPLEKILPLLASLQRIRVRLPEGDALRYMIERTVNWQHRAQQLLSSGNLKLVQDQVGSGLLSSRWPASAGQASATDKVSQPPGTTSFSLPDDWDNRTSYLHSPFSTGQSCLPLHGLSPEVNELLMEAQLLQVSLPEIQELYQTLLTKPSSVQQADRSSPVRSSSEKNDCLRGKRDAINSPERKLKRRPEREGLPSERWDRVKHMRTPQKKKIKLSHPKDMDSFKLERERSYDLVRNAETHSLPSDTSYSEQEDSEDEDAICPAVSCLQPEGDEVDWVQCDGSCNQWFHQVCVGVSPEMAEKEDYICVRCTGKDAPSRK.

Residues 1-14 (MEPATTLPPGPRPA) are compositionally biased toward pro residues. Positions 1–22 (MEPATTLPPGPRPALPLGGPGP) are disordered. Positions 32-73 (CPVFEPSWEEFADPFAFIHKIRPIAEQTGICKVRPPPDWQPP) constitute a JmjN domain. The region spanning 97 to 187 (TRVKLNFLDQ…ILNPYNLFLS (91 aa)) is the ARID domain. Residues Lys148, Lys204, Lys209, Lys242, Lys274, and Lys278 each participate in a glycyl lysine isopeptide (Lys-Gly) (interchain with G-Cter in SUMO2) cross-link. Residues 200–228 (TSDTKDKEYKPHDIPQRQSVQPAETCPPA) form a disordered region. The segment covering 202–214 (DTKDKEYKPHDIP) has biased composition (basic and acidic residues). The interval 269-297 (NEKEMKSTIKQEPTEKKDCELESEKEKPK) is disordered. The PHD-type 1 zinc-finger motif lies at 309–359 (LYVCLLCGSGNDEDRLLLCDGCDDSYHTFCLVPPLHDVPKGDWRCPKCLAQ). 2-oxoglutarate is bound at residue Tyr425. The 167-residue stretch at 453–619 (EYLDSGWNLN…LGRQCVEHYR (167 aa)) folds into the JmjC domain. Residues His499 and Glu501 each contribute to the Fe cation site. Residues Ser507, Asn509, and Lys517 each contribute to the 2-oxoglutarate site. Position 587 (His587) interacts with Fe cation. The C5HC2 zinc finger occupies 692–744 (CIKCKTTCFMSAISCSCKPGLLVCLHHVKELCSCPPYKYNLRYRYTLDDLYPM). Lys769 participates in a covalent cross-link: Glycyl lysine isopeptide (Lys-Gly) (interchain with G-Cter in SUMO2). Lys832 is subject to N6-acetyllysine. Residue Ser986 is modified to Phosphoserine. The PHD-type 2 zinc-finger motif lies at 1176–1224 (MKVCLCQKTPATPMIQCELCRDAFHTSCVAAPSISQSSRIWLCPHCRRS). Positions 1297–1314 (QASATDKVSQPPGTTSFS) are enriched in polar residues. The segment at 1297-1318 (QASATDKVSQPPGTTSFSLPDD) is disordered. Ser1328 bears the Phosphoserine mark. A compositionally biased stretch (polar residues) spans 1374–1388 (PSSVQQADRSSPVRS). The tract at residues 1374–1447 (PSSVQQADRS…IKLSHPKDMD (74 aa)) is disordered. A compositionally biased stretch (basic and acidic residues) spans 1389–1427 (SSEKNDCLRGKRDAINSPERKLKRRPEREGLPSERWDRV). A compositionally biased stretch (basic residues) spans 1428 to 1441 (KHMRTPQKKKIKLS). Residue Lys1450 forms a Glycyl lysine isopeptide (Lys-Gly) (interchain with G-Cter in SUMO2) linkage. A Phosphoserine modification is found at Ser1456. The PHD-type 3 zinc finger occupies 1484–1538 (DAICPAVSCLQPEGDEVDWVQCDGSCNQWFHQVCVGVSPEMAEKEDYICVRCTGK).

Belongs to the JARID1 histone demethylase family. As to quaternary structure, interacts with FOXG1B, PAX9, MYC, MYCN and RB1. Interacts with HDAC1, HDAC4, HDAC5 and HDAC7. Interacts (via PHD-type 1 zinc finger) with histone H3 unmodified at 'Lys-4'; the interaction is inhibited when histone H3 is methylated at 'Arg-2' or 'Lys-4'. Fe(2+) is required as a cofactor. In terms of tissue distribution, present at highest levels in testis, where it is enriched in spermatogonia and pachytene cells (at protein level).

Its subcellular location is the nucleus. The catalysed reaction is N(6),N(6),N(6)-trimethyl-L-lysyl(4)-[histone H3] + 3 2-oxoglutarate + 3 O2 = L-lysyl(4)-[histone H3] + 3 formaldehyde + 3 succinate + 3 CO2. In terms of biological role, histone demethylase that demethylates 'Lys-4' of histone H3, thereby playing a central role in histone code. Does not demethylate histone H3 'Lys-9' or H3 'Lys-27'. Demethylates trimethylated, dimethylated and monomethylated H3 'Lys-4'. Acts as a transcriptional corepressor for FOXG1B and PAX9. Represses the CLOCK-BMAL1 heterodimer-mediated transcriptional activation of the core clock component PER2. This Mus musculus (Mouse) protein is Lysine-specific demethylase 5B (Kdm5b).